Here is a 298-residue protein sequence, read N- to C-terminus: Acetylglutamate kinase (298 aa).

Residues Gly69–Gly70, Arg91, and Asn196 each bind substrate.

It belongs to the acetylglutamate kinase family. ArgB subfamily.

The protein localises to the cytoplasm. The catalysed reaction is N-acetyl-L-glutamate + ATP = N-acetyl-L-glutamyl 5-phosphate + ADP. Its pathway is amino-acid biosynthesis; L-arginine biosynthesis; N(2)-acetyl-L-ornithine from L-glutamate: step 2/4. Its function is as follows. Catalyzes the ATP-dependent phosphorylation of N-acetyl-L-glutamate. This is Acetylglutamate kinase from Bradyrhizobium sp. (strain ORS 278).